We begin with the raw amino-acid sequence, 643 residues long: CCR4-associated factor 4 (643 aa).

Residues 1–274 are required for interaction with FIS1 and MDV1; it reads MGSGDTRGES…AISSLCDVES (274 aa). The tract at residues 74 to 126 is sufficient for interaction with FIS1; sequence FQNNYADSATTFRILAHLDEQRYPLPNGAAEKNLPSLFEGFKATVSIIQQRLL. The stretch at 160–255 forms a coiled coil; that stretch reads DLTHLLEDVE…KQMEEERSSE (96 aa). A compositionally biased stretch (basic and acidic residues) spans 243-254; it reads SLRKQMEEERSS. A disordered region spans residues 243–262; it reads SLRKQMEEERSSEASSFTQN. WD repeat units follow at residues 317 to 357, 360 to 400, 422 to 461, 479 to 526, 527 to 566, 568 to 603, and 614 to 643; these read EHGN…QVGE, GHLA…EIYL, LHKDEITALSFDSEALVSGSRDKKIFHWDLTTGKCIQQLD, NNGA…RLLE, GHTDGITSLKFDSEKLVTGSMDNSVRIWDLRTSSILDVIA, DLPVSSLDFDGKLITVGANEGGVNVFNMERDEHWMT, and ELSRRIAIVKYKDGFLINGHNDGDINVWTL.

Belongs to the WD repeat MDV1/CAF4 family. Interacts with DNM1, FIS1 and MDV1, components of the mitochondrial fission machinery. Interacts via its WD repeats with DNM1. Interacts with CCR4 and NOT1, components of the CCR4-NOT complex. It is however not a component of the 1.0 MDa CCR4-NOT core complex, but appears to be part of a less characterized, 1.9 MDa CCR4-NOT complex. Interacts with DBF2, another likely component of the 1.9 MDa complex. Interacts with SRB9 and SRB10, components of the SRB8-11 complex.

It is found in the mitochondrion outer membrane. Its function is as follows. Involved in mitochondrial fission. Has a partially redundant function to MDV1 in acting as an adapter protein, binding to FIS1 on the mitochondrial outer membrane and recruiting the dynamin-like GTPase DNM1 to form mitochondrial fission complexes. Plays a key role in determining the polarized localization of those DNM1 clusters that are not immediately involved in the mitochondrial fission process. This Saccharomyces cerevisiae (strain ATCC 204508 / S288c) (Baker's yeast) protein is CCR4-associated factor 4 (CAF4).